The primary structure comprises 194 residues: Thymidine kinase (194 aa).

ATP-binding positions include 15-22 and 88-91; these read GSMFSGKS and DEVQ. The active-site Proton acceptor is glutamate 89. Positions 145, 148, 183, and 186 each coordinate Zn(2+).

It belongs to the thymidine kinase family. As to quaternary structure, homotetramer.

Its subcellular location is the cytoplasm. The enzyme catalyses thymidine + ATP = dTMP + ADP + H(+). This Bacillus cereus (strain AH820) protein is Thymidine kinase.